The primary structure comprises 334 residues: uncharacterized protein (334 aa).

2 helical membrane passes run Ala19–Ile39 and Leu55–Phe75. Residues Lys308–Asn334 are disordered. Basic and acidic residues predominate over residues Val319 to Asn334.

It is found in the cell membrane. This is an uncharacterized protein from Mycoplasma genitalium (strain ATCC 33530 / DSM 19775 / NCTC 10195 / G37) (Mycoplasmoides genitalium).